The following is a 1383-amino-acid chain: NPC intracellular cholesterol transporter 1 homolog 1 (1383 aa).

Positions Met-1–Ala-20 are cleaved as a signal peptide. Disulfide bonds link Cys-22–Cys-76, Cys-28–Cys-39, Cys-65–Cys-111, Cys-77–Cys-115, Cys-99–Cys-246, Cys-102–Cys-167, Cys-182–Cys-187, and Cys-235–Cys-251. The N-linked (GlcNAc...) asparagine glycan is linked to Asn-42. The N-linked (GlcNAc...) asparagine glycan is linked to Asn-231. A run of 2 helical transmembrane segments spans residues Ile-282–Phe-302 and Pro-353–Tyr-373. An N-linked (GlcNAc...) asparagine glycan is attached at Asn-447. Cystine bridges form between Cys-464–Cys-474 and Cys-526–Cys-541. Asn-558 carries an N-linked (GlcNAc...) asparagine glycan. A run of 6 helical transmembrane segments spans residues Glu-627–Gly-647, Ile-665–Ile-685, Ala-697–Val-717, Thr-746–Phe-766, Gly-780–Trp-800, and Ile-856–Ile-876. Positions Glu-627–Trp-800 constitute an SSD domain. 4 cysteine pairs are disulfide-bonded: Cys-929/Cys-934, Cys-976/Cys-1046, Cys-977/Cys-1005, and Cys-988/Cys-1002. N-linked (GlcNAc...) asparagine glycans are attached at residues Asn-993 and Asn-1082. Transmembrane regions (helical) follow at residues Ile-1126–Cys-1146, Ala-1157–Phe-1177, Ile-1179–Phe-1199, Ile-1226–Ser-1246, and Leu-1260–Leu-1280.

This sequence belongs to the patched family.

It localises to the membrane. It catalyses the reaction cholesterol(in) = cholesterol(out). Involved in the uptake or utilization of cholesterol. Ncr-1 and ncr-2 act redundantly to prevent dauer larva formation under favorable growth conditions, and are required for the normal functioning of ADF, ASI and ASG neurons. This chain is NPC intracellular cholesterol transporter 1 homolog 1, found in Caenorhabditis elegans.